Reading from the N-terminus, the 354-residue chain is MGCTLSAEERAAMERSKAIEKNLKEDGMQAAKDIKLLLLGAGESGKSTIVKQMKIIHEGGFTSEDNKQYKPVVYSNTIQSLVAIIRAMGTLSIPFGDNERESDAKMVLDVIARMEDTEPFSEELLAAMKRLWVDSGVQECLGRANEYQLNDSAKYFLDDLDRLGAKDYMPTEQDILRTRVKTTGIVEVHFSFKNLNFKLFDVGGQRSERKKWIHCFEDVTAIIFCVAMSEYDQVLHEDETTNRMQESLKLFDSICNNKWFTETSIILFLNKKDLFEEKIKKSPLTICFPEYTGKQMYQEASAYIQAQFEAKNKSSAKEIYCHQTCATDTNNIQFVFDAVTDVIIANNLRGCGLY.

Residue glycine 2 is the site of N-myristoyl glycine attachment. Residue cysteine 3 is the site of S-palmitoyl cysteine attachment. The G-alpha domain occupies 32–354 (KDIKLLLLGA…ANNLRGCGLY (323 aa)). A G1 motif region spans residues 35 to 48 (KLLLLGAGESGKST). GTP is bound by residues 40 to 47 (GAGESGKS), 176 to 182 (LRTRVKT), 201 to 205 (DVGGQ), 270 to 273 (NKKD), and alanine 326. Residues serine 47 and threonine 182 each contribute to the Mg(2+) site. A G2 motif region spans residues 174-182 (DILRTRVKT). The tract at residues 197–206 (FKLFDVGGQR) is G3 motif. The segment at 266–273 (ILFLNKKD) is G4 motif. Residues 324–329 (TCATDT) form a G5 motif region.

It belongs to the G-alpha family. G(i/o/t/z) subfamily. In terms of assembly, g proteins are composed of 3 units; alpha, beta and gamma. The alpha chain contains the guanine nucleotide binding site.

Guanine nucleotide-binding proteins (G proteins) are involved as modulators or transducers in various transmembrane signaling systems. The G(o) protein function is not clear. This chain is Guanine nucleotide-binding protein G(o) subunit alpha, found in Lymnaea stagnalis (Great pond snail).